The primary structure comprises 63 residues: Large ribosomal subunit protein bL32 (63 aa).

The segment covering 1 to 18 (MAHPKAKVSKSRRDKRRA) has biased composition (basic residues). Residues 1–25 (MAHPKAKVSKSRRDKRRAQFNARTK) are disordered.

Belongs to the bacterial ribosomal protein bL32 family.

This Chlorobium phaeovibrioides (strain DSM 265 / 1930) (Prosthecochloris vibrioformis (strain DSM 265)) protein is Large ribosomal subunit protein bL32.